The chain runs to 650 residues: Laccase-like multicopper oxidase 1 (650 aa).

The signal sequence occupies residues 1 to 20 (MLLSKLSILLAKWLSVAVYA). Plastocyanin-like domains lie at 41 to 151 (QVPS…IVED), 162 to 360 (ERIL…LRYN), and 439 to 595 (KPVL…VVGD). A disulfide bridge links Cys-46 with Cys-254. 2 N-linked (GlcNAc...) asparagine glycosylation sites follow: Asn-55 and Asn-83. Cu cation-binding residues include His-87, His-89, His-133, and His-135. His-501, His-504, His-506, His-576, Cys-577, His-578, and His-582 together coordinate Cu cation. N-linked (GlcNAc...) asparagine glycosylation occurs at Asn-620.

Belongs to the multicopper oxidase family. Monomer. In terms of processing, N-glycosylation Asn-55 and Asn-83 is involved in folding, conformational stability and laccase activity.

The catalysed reaction is 2 2',3,4-trihydroxy-trans-chalcone + O2 + 2 H(+) = 2 3',4'-dihydroxyaurone + 2 H2O. With respect to regulation, retains almost half of its activity in presence of high salt concentrations up to 100 mM NaCl. Retains also more than 85% of its original activity in the presence of 1 mM EDTA, indicating a satisfactory resistance towards chelators, which is rare among metal-containing enzyme. The activity drops significantly in the presence of NaN(3) or SDS. Appears more active in the presence of methanol compared to ethanol, but acetone or DMSO addition severely affect remaining laccase activity. Functionally, yellow laccase-like multicopper oxidase that is able to oxidize a variety of phenolic compounds including standard laccase substrates such as 2'-azino-bis(3-ethylbenzothiazoline-6-sulphonic acid) (ABTS) and 2,6-dimethoxyphenol (2,6-DMP). The existence of an ortho-hydroxy group is crucial for oxidation since pyrogallol and catechol, which contain ortho-hydroxy groups, are readily oxidized, which is not the case for resorcinol and hydroquinone, that contain meta- and para-hydroxy groups, respectively. The same is also true for the existence of a methoxy group in an ortho-position, since 2,6-DMP, guaiacol and ferulic and caffeic acids are also rather easily oxidized compared with the corresponding unsubstituted compound. Can be used for the bioconversion of 2',3,4-trihy-droxychalcone to 3',4'-dihydroxy-aurone, a bioactive aurone recently shown to possess inhibitory activity against several isoforms of the histone deacetylase complex (HDAC). The sequence is that of Laccase-like multicopper oxidase 1 from Thermothelomyces thermophilus (strain ATCC 42464 / BCRC 31852 / DSM 1799) (Sporotrichum thermophile).